The sequence spans 240 residues: UDP-2,3-diacylglucosamine hydrolase (240 aa).

5 residues coordinate Mn(2+): D8, H10, D41, N79, and H114. 79 to 80 (NR) provides a ligand contact to substrate. D122, S160, N164, K167, and H195 together coordinate substrate. Positions 195 and 197 each coordinate Mn(2+).

The protein belongs to the LpxH family. Requires Mn(2+) as cofactor.

It is found in the cell inner membrane. It carries out the reaction UDP-2-N,3-O-bis[(3R)-3-hydroxytetradecanoyl]-alpha-D-glucosamine + H2O = 2-N,3-O-bis[(3R)-3-hydroxytetradecanoyl]-alpha-D-glucosaminyl 1-phosphate + UMP + 2 H(+). The protein operates within glycolipid biosynthesis; lipid IV(A) biosynthesis; lipid IV(A) from (3R)-3-hydroxytetradecanoyl-[acyl-carrier-protein] and UDP-N-acetyl-alpha-D-glucosamine: step 4/6. Hydrolyzes the pyrophosphate bond of UDP-2,3-diacylglucosamine to yield 2,3-diacylglucosamine 1-phosphate (lipid X) and UMP by catalyzing the attack of water at the alpha-P atom. Involved in the biosynthesis of lipid A, a phosphorylated glycolipid that anchors the lipopolysaccharide to the outer membrane of the cell. The polypeptide is UDP-2,3-diacylglucosamine hydrolase (Escherichia fergusonii (strain ATCC 35469 / DSM 13698 / CCUG 18766 / IAM 14443 / JCM 21226 / LMG 7866 / NBRC 102419 / NCTC 12128 / CDC 0568-73)).